A 483-amino-acid chain; its full sequence is Dual specificity protein kinase CLK1 (483 aa).

The disordered stretch occupies residues 1 to 49; sequence MRHSKRTYCPDWDERDWDYGTWRSSSSHKRKKRSHSSAREQKRCRYDHS. Basic residues predominate over residues 26 to 36; that stretch reads SSHKRKKRSHS. Positions 29–33 match the Nuclear localization signal motif; the sequence is KRKKR. Basic and acidic residues predominate over residues 37 to 49; that stretch reads SAREQKRCRYDHS. Ser-61 is modified (phosphoserine). Residues 84-111 are compositionally biased toward low complexity; that stretch reads EPGHPYGEPGSRYQMHSSKSSGRSGRSS. Positions 84 to 146 are disordered; sequence EPGHPYGEPG…SRSVEDDEEG (63 aa). The segment covering 112-137 has biased composition (basic residues); the sequence is YKSKHRSRHHTSQHHSHGKSHRRKRS. Ser-139 carries the phosphoserine modification. The 317-residue stretch at 160–476 folds into the Protein kinase domain; it reads YEIVDTLGEG…LKEALKHPFF (317 aa). ATP-binding positions include 166-174 and Lys-190; that span reads LGEGAFGKV. The active-site Proton acceptor is the Asp-287.

It belongs to the protein kinase superfamily. CMGC Ser/Thr protein kinase family. Lammer subfamily. Interacts with PPIG and UBL5. In terms of processing, autophosphorylates on all three types of residues.

It is found in the nucleus. The enzyme catalyses L-seryl-[protein] + ATP = O-phospho-L-seryl-[protein] + ADP + H(+). The catalysed reaction is L-threonyl-[protein] + ATP = O-phospho-L-threonyl-[protein] + ADP + H(+). It carries out the reaction L-tyrosyl-[protein] + ATP = O-phospho-L-tyrosyl-[protein] + ADP + H(+). With respect to regulation, regulates splicing of its own pre-mRNA according to its kinase activity; increased expression of the catalytically active form influences splicing to generate the catalytically inactive splicing variant lacking the kinase domain. Leucettine L41 inhibits its kinase activity and affects the regulation of alternative splicing mediated by phosphorylation of SR proteins. Its function is as follows. Dual specificity kinase acting on both serine/threonine and tyrosine-containing substrates. Phosphorylates serine- and arginine-rich (SR) proteins of the spliceosomal complex and may be a constituent of a network of regulatory mechanisms that enable SR proteins to control RNA splicing. Phosphorylates: SRSF1, SRSF3 and PTPN1. Regulates the alternative splicing of tissue factor (F3) pre-mRNA in endothelial cells. This is Dual specificity protein kinase CLK1 from Mus musculus (Mouse).